A 294-amino-acid polypeptide reads, in one-letter code: Cytidine deaminase (294 aa).

CMP/dCMP-type deaminase domains are found at residues Asp48–Lys168 and Leu186–Gly294. Asn89–Glu91 provides a ligand contact to substrate. His102 is a Zn(2+) binding site. Catalysis depends on Glu104, which acts as the Proton donor. Residues Cys129 and Cys132 each contribute to the Zn(2+) site.

The protein belongs to the cytidine and deoxycytidylate deaminase family. In terms of assembly, homodimer. Requires Zn(2+) as cofactor.

It carries out the reaction cytidine + H2O + H(+) = uridine + NH4(+). It catalyses the reaction 2'-deoxycytidine + H2O + H(+) = 2'-deoxyuridine + NH4(+). In terms of biological role, this enzyme scavenges exogenous and endogenous cytidine and 2'-deoxycytidine for UMP synthesis. This Salmonella dublin (strain CT_02021853) protein is Cytidine deaminase.